We begin with the raw amino-acid sequence, 578 residues long: Probable ATP-dependent RNA helicase DDX55 homolog (578 aa).

The Q motif motif lies at 7 to 37 (PVALKTFREKLGPELLEVFDKSYKSFTDVQV). The Helicase ATP-binding domain occupies 40 to 218 (GTHLLNLSDV…VFGLRNAKQV (179 aa)). ATP is bound at residue 53-60 (SPTGSGKT). A DEAD box motif is present at residues 166 to 169 (DEAD). Residues 231–393 (TLKNYYVECR…EIKVPTNNSR (163 aa)) form the Helicase C-terminal domain. The disordered stretch occupies residues 507–557 (AAKDKKRREKEARKLKKMGGRFRNGGGTGRKAEEKKALKRKAEEEDDAQND). A compositionally biased stretch (basic residues) spans 510–526 (DKKRREKEARKLKKMGG). A compositionally biased stretch (basic and acidic residues) spans 536 to 549 (RKAEEKKALKRKAE).

The protein belongs to the DEAD box helicase family. DDX55/SPB4 subfamily.

The enzyme catalyses ATP + H2O = ADP + phosphate + H(+). Probable ATP-binding RNA helicase. The polypeptide is Probable ATP-dependent RNA helicase DDX55 homolog (Caenorhabditis elegans).